The sequence spans 248 residues: Probable transcriptional regulatory protein Plav_2114 (248 aa).

The protein belongs to the TACO1 family.

The protein localises to the cytoplasm. This Parvibaculum lavamentivorans (strain DS-1 / DSM 13023 / NCIMB 13966) protein is Probable transcriptional regulatory protein Plav_2114.